The primary structure comprises 362 residues: Phospho-N-acetylmuramoyl-pentapeptide-transferase (362 aa).

The next 10 membrane-spanning stretches (helical) occupy residues 27–47 (VMAA…VIRW), 73–93 (TMGG…WGDL), 97–117 (YVWV…VDDW), 132–152 (WKYL…GLTA), 160–180 (LIVP…FVAL), 200–220 (GLAI…AYVA), 237–257 (AGEL…FLWF), 264–284 (VFMG…VAVV), 289–309 (IVLF…MVQV), and 339–359 (QVVV…LSTL).

It belongs to the glycosyltransferase 4 family. MraY subfamily. The cofactor is Mg(2+).

The protein resides in the cell inner membrane. The enzyme catalyses UDP-N-acetyl-alpha-D-muramoyl-L-alanyl-gamma-D-glutamyl-meso-2,6-diaminopimeloyl-D-alanyl-D-alanine + di-trans,octa-cis-undecaprenyl phosphate = di-trans,octa-cis-undecaprenyl diphospho-N-acetyl-alpha-D-muramoyl-L-alanyl-D-glutamyl-meso-2,6-diaminopimeloyl-D-alanyl-D-alanine + UMP. It participates in cell wall biogenesis; peptidoglycan biosynthesis. Functionally, catalyzes the initial step of the lipid cycle reactions in the biosynthesis of the cell wall peptidoglycan: transfers peptidoglycan precursor phospho-MurNAc-pentapeptide from UDP-MurNAc-pentapeptide onto the lipid carrier undecaprenyl phosphate, yielding undecaprenyl-pyrophosphoryl-MurNAc-pentapeptide, known as lipid I. This Aromatoleum aromaticum (strain DSM 19018 / LMG 30748 / EbN1) (Azoarcus sp. (strain EbN1)) protein is Phospho-N-acetylmuramoyl-pentapeptide-transferase.